The chain runs to 334 residues: Broad-range acid phosphatase DET1 (334 aa).

The active-site Tele-phosphohistidine intermediate is the histidine 32. Substrate-binding positions include asparagine 38, 44-45 (NG), and arginine 108. Glutamate 126 (proton donor/acceptor) is an active-site residue. Substrate contacts are provided by residues 168 to 171 (LNNT) and 195 to 205 (RVKDEPRIREQ). A Phosphoserine modification is found at serine 248.

This sequence belongs to the phosphoglycerate mutase family.

It localises to the cytoplasm. Its subcellular location is the nucleus. Metal-independent, broad-range acid phosphatase. Involved, either directly or indirectly, in the bidirectional transport of sterols between the endoplasmic reticulum and the plasma membrane. The sequence is that of Broad-range acid phosphatase DET1 (DET1) from Saccharomyces cerevisiae (strain ATCC 204508 / S288c) (Baker's yeast).